The sequence spans 354 residues: METAGLSFSRYFVVMNLLQMTIPSSEQFTVNSLERPVLAALGGNVELSCQLSPPQSAEHMEIRWFRSHYTRPVYLYKEGKDLYGETISKYVERTKLLKEAIGEGKVTLRILNVSADDDGQYHCFFKDGDVYEEAIAEVKVTATSLEIQILIHPPNTKGLLVECNSEGWFPQPQMEWRDSRGGIIPPSSKSHSQNGNKLFNMKMSLLLRDSSHGNITCYLRNPITGQEERTSIVLSDKLFSWDSVWILILVAILAVLLFFIMMPSVELQQREQRRCCDWNSPCLIGIGIVFSSMCVIIGLTITLHHRNRVPVSDRKFQLVSMYLEDMTVMVWVLMVFITMLISLVYFRLRGFFQI.

Residues 23–141 form the Ig-like V-type 1 domain; sequence PSSEQFTVNS…EEAIAEVKVT (119 aa). 2 disulfide bridges follow: C49–C123 and C163–C217. One can recognise an Ig-like C1-type 2 domain in the interval 161–233; it reads VECNSEGWFP…TGQEERTSIV (73 aa). 3 helical membrane passes run 243–263, 283–303, and 326–346; these read SVWI…IMMP, LIGI…TITL, and MTVM…LVYF.

It belongs to the SKINT family. Expressed in the thymus and skin.

Its subcellular location is the membrane. Its function is as follows. May act by engaging a cell surface molecule on immature T-cells in the embryonic thymus. The chain is Selection and upkeep of intraepithelial T-cells protein 1 (SKINT1) from Macaca fascicularis (Crab-eating macaque).